A 229-amino-acid chain; its full sequence is Large ribosomal subunit protein uL1 (229 aa).

It belongs to the universal ribosomal protein uL1 family. As to quaternary structure, part of the 50S ribosomal subunit.

Binds directly to 23S rRNA. The L1 stalk is quite mobile in the ribosome, and is involved in E site tRNA release. Functionally, protein L1 is also a translational repressor protein, it controls the translation of the L11 operon by binding to its mRNA. The chain is Large ribosomal subunit protein uL1 from Phenylobacterium zucineum (strain HLK1).